Reading from the N-terminus, the 138-residue chain is Probable lactoylglutathione lyase (138 aa).

The VOC domain occupies 5-129 (RILHTMLRVG…DGYMIELIQN (125 aa)). H8 provides a ligand contact to Ni(2+). R12 is a substrate binding site. E59 lines the Ni(2+) pocket. 2 residues coordinate substrate: N63 and H77. Ni(2+)-binding residues include H77 and E125. The Proton donor/acceptor role is filled by E125.

This sequence belongs to the glyoxalase I family. The cofactor is Ni(2+).

It carries out the reaction (R)-S-lactoylglutathione = methylglyoxal + glutathione. It functions in the pathway secondary metabolite metabolism; methylglyoxal degradation; (R)-lactate from methylglyoxal: step 1/2. Catalyzes the conversion of hemimercaptal, formed from methylglyoxal and glutathione, to S-lactoylglutathione. The chain is Probable lactoylglutathione lyase (gloA) from Vibrio parahaemolyticus serotype O3:K6 (strain RIMD 2210633).